Here is a 395-residue protein sequence, read N- to C-terminus: S-adenosylmethionine synthase (395 aa).

Histidine 16 contacts ATP. Mg(2+) is bound at residue aspartate 18. Glutamate 44 serves as a coordination point for K(+). Positions 57 and 100 each coordinate L-methionine. Residues 100 to 110 (QSTDIAQGVNE) form a flexible loop region. ATP-binding positions include 174–176 (DAK), 241–242 (RF), aspartate 250, 256–257 (RK), alanine 273, and lysine 277. Aspartate 250 is an L-methionine binding site. Lysine 281 contacts L-methionine.

Belongs to the AdoMet synthase family. Homotetramer; dimer of dimers. It depends on Mg(2+) as a cofactor. K(+) is required as a cofactor.

The protein resides in the cytoplasm. The catalysed reaction is L-methionine + ATP + H2O = S-adenosyl-L-methionine + phosphate + diphosphate. It participates in amino-acid biosynthesis; S-adenosyl-L-methionine biosynthesis; S-adenosyl-L-methionine from L-methionine: step 1/1. Its function is as follows. Catalyzes the formation of S-adenosylmethionine (AdoMet) from methionine and ATP. The overall synthetic reaction is composed of two sequential steps, AdoMet formation and the subsequent tripolyphosphate hydrolysis which occurs prior to release of AdoMet from the enzyme. The protein is S-adenosylmethionine synthase of Streptococcus uberis (strain ATCC BAA-854 / 0140J).